A 367-amino-acid polypeptide reads, in one-letter code: Glutamate 5-kinase (367 aa).

Residue Lys10 participates in ATP binding. Positions 50, 137, and 149 each coordinate substrate. ATP contacts are provided by residues 169–170 (TD) and 211–217 (TGGMATK). In terms of domain architecture, PUA spans 275-353 (AGEITVDDGA…QQISEILGYE (79 aa)).

Belongs to the glutamate 5-kinase family.

It is found in the cytoplasm. The catalysed reaction is L-glutamate + ATP = L-glutamyl 5-phosphate + ADP. It participates in amino-acid biosynthesis; L-proline biosynthesis; L-glutamate 5-semialdehyde from L-glutamate: step 1/2. Catalyzes the transfer of a phosphate group to glutamate to form L-glutamate 5-phosphate. The sequence is that of Glutamate 5-kinase from Yersinia pseudotuberculosis serotype IB (strain PB1/+).